Here is a 295-residue protein sequence, read N- to C-terminus: Zinc finger C2H2 protein ECU08_0560 (295 aa).

2 consecutive C2H2-type zinc fingers follow at residues 219–243 (FVCT…NLMH) and 249–273 (HKCR…YKVH).

The sequence is that of Zinc finger C2H2 protein ECU08_0560 from Encephalitozoon cuniculi (strain GB-M1) (Microsporidian parasite).